Consider the following 153-residue polypeptide: SsrA-binding protein (153 aa).

This sequence belongs to the SmpB family.

It is found in the cytoplasm. In terms of biological role, required for rescue of stalled ribosomes mediated by trans-translation. Binds to transfer-messenger RNA (tmRNA), required for stable association of tmRNA with ribosomes. tmRNA and SmpB together mimic tRNA shape, replacing the anticodon stem-loop with SmpB. tmRNA is encoded by the ssrA gene; the 2 termini fold to resemble tRNA(Ala) and it encodes a 'tag peptide', a short internal open reading frame. During trans-translation Ala-aminoacylated tmRNA acts like a tRNA, entering the A-site of stalled ribosomes, displacing the stalled mRNA. The ribosome then switches to translate the ORF on the tmRNA; the nascent peptide is terminated with the 'tag peptide' encoded by the tmRNA and targeted for degradation. The ribosome is freed to recommence translation, which seems to be the essential function of trans-translation. This chain is SsrA-binding protein, found in Orientia tsutsugamushi (strain Ikeda) (Rickettsia tsutsugamushi).